The chain runs to 103 residues: MVNAAQRTRVKVEADNRPSVDTHPPGVQPSPGTGGTRHHNFMLCVVLAVPVFSLVLSGTALFTKQRRVSPDDGLITRPILIAVATGALLCFVEKLTDRAGSIC.

Residues 1-34 (MVNAAQRTRVKVEADNRPSVDTHPPGVQPSPGTG) form a disordered region. Residues 10–20 (VKVEADNRPSV) show a composition bias toward basic and acidic residues. The next 2 helical transmembrane spans lie at 42 to 62 (MLCV…TALF) and 73 to 93 (GLIT…CFVE).

Its subcellular location is the cell inner membrane. This chain is Putative protein YmfH (ymfH), found in Escherichia coli (strain K12).